The sequence spans 138 residues: Large ribosomal subunit protein uL16 (138 aa).

The protein belongs to the universal ribosomal protein uL16 family. As to quaternary structure, part of the 50S ribosomal subunit.

Binds 23S rRNA and is also seen to make contacts with the A and possibly P site tRNAs. This is Large ribosomal subunit protein uL16 from Rhodospirillum rubrum (strain ATCC 11170 / ATH 1.1.1 / DSM 467 / LMG 4362 / NCIMB 8255 / S1).